Here is a 288-residue protein sequence, read N- to C-terminus: Pantothenate synthetase (288 aa).

35-42 contacts ATP; the sequence is MGALHDGH. The active-site Proton donor is His-42. Residue Gln-66 participates in (R)-pantoate binding. Residue Gln-66 coordinates beta-alanine. 152–155 lines the ATP pocket; that stretch reads GEKD. Residue Gln-158 coordinates (R)-pantoate. ATP contacts are provided by residues Gly-181 and 189–192; that span reads LSSR.

This sequence belongs to the pantothenate synthetase family. Homodimer.

It is found in the cytoplasm. The catalysed reaction is (R)-pantoate + beta-alanine + ATP = (R)-pantothenate + AMP + diphosphate + H(+). Its pathway is cofactor biosynthesis; (R)-pantothenate biosynthesis; (R)-pantothenate from (R)-pantoate and beta-alanine: step 1/1. Its function is as follows. Catalyzes the condensation of pantoate with beta-alanine in an ATP-dependent reaction via a pantoyl-adenylate intermediate. The sequence is that of Pantothenate synthetase from Maricaulis maris (strain MCS10) (Caulobacter maris).